Reading from the N-terminus, the 160-residue chain is NADH-quinone oxidoreductase subunit B (160 aa).

Positions 37, 38, 102, and 132 each coordinate [4Fe-4S] cluster.

This sequence belongs to the complex I 20 kDa subunit family. As to quaternary structure, NDH-1 is composed of 14 different subunits. Subunits NuoB, C, D, E, F, and G constitute the peripheral sector of the complex. [4Fe-4S] cluster is required as a cofactor.

Its subcellular location is the cell membrane. It carries out the reaction a quinone + NADH + 5 H(+)(in) = a quinol + NAD(+) + 4 H(+)(out). Functionally, NDH-1 shuttles electrons from NADH, via FMN and iron-sulfur (Fe-S) centers, to quinones in the respiratory chain. Couples the redox reaction to proton translocation (for every two electrons transferred, four hydrogen ions are translocated across the cytoplasmic membrane), and thus conserves the redox energy in a proton gradient. This chain is NADH-quinone oxidoreductase subunit B, found in Polynucleobacter asymbioticus (strain DSM 18221 / CIP 109841 / QLW-P1DMWA-1) (Polynucleobacter necessarius subsp. asymbioticus).